A 728-amino-acid chain; its full sequence is Polyribonucleotide nucleotidyltransferase (728 aa).

Residues Asp509 and Asp515 each contribute to the Mg(2+) site. In terms of domain architecture, KH spans 576–638; the sequence is TKIYTFYIPK…TKLKIAILKI (63 aa). An S1 motif domain is found at 648–715; it reads GTIYKAKVKN…KFRKIKLSHK (68 aa).

The protein belongs to the polyribonucleotide nucleotidyltransferase family. Mg(2+) serves as cofactor.

Its subcellular location is the cytoplasm. It carries out the reaction RNA(n+1) + phosphate = RNA(n) + a ribonucleoside 5'-diphosphate. Involved in mRNA degradation. Catalyzes the phosphorolysis of single-stranded polyribonucleotides processively in the 3'- to 5'-direction. This chain is Polyribonucleotide nucleotidyltransferase, found in Karelsulcia muelleri (strain GWSS) (Sulcia muelleri).